A 148-amino-acid chain; its full sequence is Ubiquitin-conjugating enzyme E2 29 (148 aa).

The UBC core domain maps to 1–147 (MATRRILKEL…ARSWTQKYAL (147 aa)). Cysteine 85 serves as the catalytic Glycyl thioester intermediate.

This sequence belongs to the ubiquitin-conjugating enzyme family.

The catalysed reaction is S-ubiquitinyl-[E1 ubiquitin-activating enzyme]-L-cysteine + [E2 ubiquitin-conjugating enzyme]-L-cysteine = [E1 ubiquitin-activating enzyme]-L-cysteine + S-ubiquitinyl-[E2 ubiquitin-conjugating enzyme]-L-cysteine.. Its pathway is protein modification; protein ubiquitination. Its function is as follows. Accepts the ubiquitin from the E1 complex and catalyzes its covalent attachment to other proteins. In Arabidopsis thaliana (Mouse-ear cress), this protein is Ubiquitin-conjugating enzyme E2 29 (UBC29).